A 103-amino-acid polypeptide reads, in one-letter code: Large ribosomal subunit protein bL21 (103 aa).

It belongs to the bacterial ribosomal protein bL21 family. As to quaternary structure, part of the 50S ribosomal subunit. Contacts protein L20.

This protein binds to 23S rRNA in the presence of protein L20. In Pasteurella multocida (strain Pm70), this protein is Large ribosomal subunit protein bL21.